Reading from the N-terminus, the 525-residue chain is ATP synthase subunit alpha (525 aa).

Residue 171–178 (GDRQTGKS) coordinates ATP.

The protein belongs to the ATPase alpha/beta chains family. F-type ATPases have 2 components, CF(1) - the catalytic core - and CF(0) - the membrane proton channel. CF(1) has five subunits: alpha(3), beta(3), gamma(1), delta(1), epsilon(1). CF(0) has three main subunits: a(1), b(2) and c(9-12). The alpha and beta chains form an alternating ring which encloses part of the gamma chain. CF(1) is attached to CF(0) by a central stalk formed by the gamma and epsilon chains, while a peripheral stalk is formed by the delta and b chains.

It is found in the cell inner membrane. It catalyses the reaction ATP + H2O + 4 H(+)(in) = ADP + phosphate + 5 H(+)(out). Functionally, produces ATP from ADP in the presence of a proton gradient across the membrane. The alpha chain is a regulatory subunit. This is ATP synthase subunit alpha from Flavobacterium psychrophilum (strain ATCC 49511 / DSM 21280 / CIP 103535 / JIP02/86).